We begin with the raw amino-acid sequence, 1084 residues long: AP-3 complex subunit beta-1 (1084 aa).

Positions 1–11 (MSSNSFAYNEQ) are enriched in polar residues. A disordered region spans residues 1 to 26 (MSSNSFAYNEQSGGGEATELGQEATS). Residues S276 and S609 each carry the phosphoserine modification. Residues 663–800 (AGKAKKENPD…KEKKTKQERN (138 aa)) form a disordered region. Positions 666–677 (AKKENPDKKFYS) are enriched in basic and acidic residues. Residues 678-717 (ESEEEEDSSESSSDSESESGSESGEDEEDDRSGDSAEDSG) show a composition bias toward acidic residues. The span at 718 to 729 (ESGSEPEAGKGR) shows a compositional bias: low complexity. The span at 738–753 (GRGDSKDVDKEKENSK) shows a compositional bias: basic and acidic residues. S742 is subject to Phosphoserine. Over residues 754–767 (TSESSSGESSSIEE) the composition is skewed to low complexity. A compositionally biased stretch (acidic residues) spans 768–781 (SSSDSESESESESE). A compositionally biased stretch (basic and acidic residues) spans 782-800 (SESRKVTKEKEKKTKQERN).

Belongs to the adaptor complexes large subunit family. In terms of assembly, adaptor protein complex 3 (AP-3) is a heterotetramer composed of two large adaptins (delta-type subunit AP3D1 and beta-type subunit AP3B1 or AP3B2), a medium adaptin (mu-type subunit AP3M1 or AP3M2) and a small adaptin (sigma-type subunit APS1 or AP3S2). AP-3 associates with the BLOC-1 complex. Interacts with KIF3A; interaction is direct; interaction is impaired by pyrophosphorylation of AP3B1. Phosphorylated on serine residues. Post-translationally, pyrophosphorylation by 5-diphosphoinositol pentakisphosphate (5-IP7) impairs interaction with KIF3A. Serine pyrophosphorylation is achieved by Mg(2+)-dependent, but enzyme independent transfer of a beta-phosphate from a inositol pyrophosphate to a pre-phosphorylated serine residue.

It localises to the cytoplasmic vesicle. The protein localises to the clathrin-coated vesicle membrane. The protein resides in the golgi apparatus. Subunit of non-clathrin- and clathrin-associated adaptor protein complex 3 (AP-3) that plays a role in protein sorting in the late-Golgi/trans-Golgi network (TGN) and/or endosomes. The AP complexes mediate both the recruitment of clathrin to membranes and the recognition of sorting signals within the cytosolic tails of transmembrane cargo molecules. AP-3 appears to be involved in the sorting of a subset of transmembrane proteins targeted to lysosomes and lysosome-related organelles. In concert with the BLOC-1 complex, AP-3 is required to target cargos into vesicles assembled at cell bodies for delivery into neurites and nerve terminals. In Bos taurus (Bovine), this protein is AP-3 complex subunit beta-1 (AP3B1).